We begin with the raw amino-acid sequence, 78 residues long: Dihydrofolate reductase type 2 (78 aa).

NADP(+) contacts are provided by residues 32 to 36 (KKSGA) and 66 to 69 (VQIY). A substrate-binding site is contributed by Ile68.

As to quaternary structure, homotetramer.

The enzyme catalyses (6S)-5,6,7,8-tetrahydrofolate + NADP(+) = 7,8-dihydrofolate + NADPH + H(+). The protein operates within cofactor biosynthesis; tetrahydrofolate biosynthesis; 5,6,7,8-tetrahydrofolate from 7,8-dihydrofolate: step 1/1. Its function is as follows. Key enzyme in folate metabolism. Catalyzes an essential reaction for de novo glycine and purine synthesis, and for DNA precursor synthesis. The chain is Dihydrofolate reductase type 2 from Escherichia coli.